The primary structure comprises 64 residues: H/ACA ribonucleoprotein complex subunit 3 (64 aa).

The protein belongs to the NOP10 family. Component of the box H/ACA small nucleolar ribonucleoprotein (H/ACA snoRNP) complex consisting of Nop60B, Gar1, NPH2 and Nop10, and associated with H/ACA-type snoRNAs.

It localises to the nucleus. The protein localises to the nucleolus. Component of the box H/ACA small nucleolar ribonucleoprotein (H/ACA snoRNP) complex, which catalyzes pseudouridylation of rRNA. This involves the isomerization of uridine such that the ribose is subsequently attached to C5, instead of the normal N1. Pseudouridine ('psi') residues may serve to stabilize the conformation of rRNAs. Required for ribosome biogenesis. H/ACA snoRNP complex-dependent ribosome biogenesis is important in female germline cell differentiation during oogenesis. The chain is H/ACA ribonucleoprotein complex subunit 3 from Drosophila melanogaster (Fruit fly).